An 819-amino-acid chain; its full sequence is Lon protease (819 aa).

The span at 1 to 14 (MNSTNNTDSQNLDP) shows a compositional bias: polar residues. Residues 1-41 (MNSTNNTDSQNLDPNASEVEKLLDESAEAEEKTDDHTPPSE) form a disordered region. Over residues 18 to 38 (EVEKLLDESAEAEEKTDDHTP) the composition is skewed to basic and acidic residues. A Lon N-terminal domain is found at 42–239 (LFILPLNKRP…KALVLLKKEL (198 aa)). 392 to 399 (GPPGVGKT) is a binding site for ATP. The Lon proteolytic domain maps to 634–818 (KTPVGVATGL…DDVFKIAFPG (185 aa)). Active-site residues include Ser724 and Lys767.

It belongs to the peptidase S16 family. In terms of assembly, homohexamer. Organized in a ring with a central cavity.

The protein resides in the cytoplasm. It catalyses the reaction Hydrolysis of proteins in presence of ATP.. Functionally, ATP-dependent serine protease that mediates the selective degradation of mutant and abnormal proteins as well as certain short-lived regulatory proteins. Required for cellular homeostasis and for survival from DNA damage and developmental changes induced by stress. Degrades polypeptides processively to yield small peptide fragments that are 5 to 10 amino acids long. Binds to DNA in a double-stranded, site-specific manner. This is Lon protease from Chlamydia muridarum (strain MoPn / Nigg).